The sequence spans 921 residues: Retinoblastoma-associated protein (921 aa).

Residues 1–36 form a disordered region; it reads MPPKAPRRAAAAEPPPPPPPPPREDDPAQDSGPEEL. N,N-dimethylproline; by NTM1 is present on Pro2. Residues Ser31 and Ser243 each carry the phosphoserine modification. Thr246, Thr350, Thr364, and Thr367 each carry phosphothreonine. Residues 341–360 form a disordered region; that stretch reads PIDSFETERTPRKNNPDEEA. Residues 346-356 show a composition bias toward basic and acidic residues; sequence ETERTPRKNNP. The interval 367–573 is domain A; that stretch reads TPVRTVMNTI…FDLIKQSKDG (207 aa). The tract at residues 367–764 is pocket; binds T and E1A; sequence TPVRTVMNTI…QRLKTNILQY (398 aa). Ser561 is subject to Phosphoserine; by CDK2. A spacer region spans residues 574-632; sequence EGPDNLEPACPLSLPLQGNHTAADMYLSPLRSPKKRTSTTRVNSAANTETQAASAFHTQ. Ser601, Ser605, and Ser617 each carry phosphoserine. The domain B stretch occupies residues 633-764; it reads KPLKSTSLAL…QRLKTNILQY (132 aa). The tract at residues 756–921 is interaction with LIMD1; it reads RLKTNILQYA…SKDVSNKEEK (166 aa). The segment at 764-921 is domain; mediates interaction with E4F1; that stretch reads YASTRPPTLS…SKDVSNKEEK (158 aa). Phosphoserine is present on residues Ser773, Ser781, Ser788, and Ser800. Lys803 carries the post-translational modification N6-methyllysine; by SMYD2. Ser804 carries the post-translational modification Phosphoserine. Phosphothreonine is present on residues Thr814, Thr816, Thr819, and Thr834. Ser848 bears the Phosphoserine mark. Lys853 bears the N6-methyllysine; by SMYD2 mark. A Bipartite nuclear localization signal motif is present at residues 853–869; the sequence is KRSAEGGNPPKPLKKLR. 2 positions are modified to N6-acetyllysine; by PCAF: Lys866 and Lys867. Residues 872–921 form a disordered region; sequence IEGADEADGSKHLPAESKFQQKLAEMTSTRTRMQKQRMNESKDVSNKEEK. The span at 908-921 shows a compositional bias: basic and acidic residues; it reads RMNESKDVSNKEEK.

It belongs to the retinoblastoma protein (RB) family. In terms of assembly, the hypophosphorylated form interacts with and sequesters the E2F1 transcription factor, thereby inhibiting E2F1 transcription. Interacts with heterodimeric E2F/DP transcription factor complexes containing TFDP1 and either E2F1/E2F, E2F3, E2F4 or E2F5, or TFDP2 and E2F4. Interacts (when hyperphosphorylated and hypophosphorylated) with PKP3; the interaction inhibits RB1 interaction with and repression of the transcription factor E2F1, potentially via sequestering RB1 to the cytoplasm. The unphosphorylated form interacts with EID1, ARID3B, KDM5A, SUV39H1, MJD2A/JHDM3A and THOC1. Interacts with the N-terminal domain of TAF1. Interacts with SNW1, ATAD5, AATF, DNMT1, LIN9, LMNA, KMT5B, KMT5C, PELP1, UHRF2, TMPO-alpha and USP4. Interacts with GRIP1 and UBR4. Interacts with ARID4A and KDM5B. Interacts with E4F1 and LIMD1. Interacts with SMARCA4/BRG1 and HDAC1. Interacts with USP4. Interacts (when methylated at Lys-853) with L3MBTL1. Binds to CDK1 and CDK2. Interacts with CHEK2; phosphorylates RB1. Interacts with PRMT2. Interacts with CEBPA. P-TEFB complex interacts with RB1; promotes phosphorylation of RB1. Interacts with RBBP9; the interaction disrupts RB1 binding to E2F1. Interacts with KAT2B/PCAF and EP300/P300. Interacts with PAX5. Interacts (phosphorylated and unphosphorylated) with BLCAP. May interact with NDC80. As to quaternary structure, (Microbial infection) Interacts with adenovirus E1a protein. (Microbial infection) Interacts with SV40 large T antigen. In terms of processing, phosphorylated. Phosphorylated by CDK6 and CDK4, and subsequently by CDK2 at Ser-561 in G1, thereby releasing E2F1 which is then able to activate cell growth. Dephosphorylated at the late M phase. Phosphorylation of threonine residues in domain C promotes interaction between the C-terminal domain C and the Pocket domain, and thereby inhibits interactions with heterodimeric E2F/DP transcription factor complexes. Dephosphorylated at Ser-788 by calcineruin upon calcium stimulation. CDK3/cyclin-C-mediated phosphorylation at Ser-800 and Ser-804 is required for G0-G1 transition. Phosphorylated by CDK1 and CDK2 upon TGFB1-mediated apoptosis. Monomethylation at Lys-803 by SMYD2 enhances phosphorylation at Ser-800 and Ser-804, and promotes cell cycle progression. Monomethylation at Lys-853 by SMYD2 promotes interaction with L3MBTL1. N-terminus is methylated by METTL11A/NTM1. Post-translationally, acetylated in the skin. Acetylation at Lys-866 and Lys-867 regulates subcellular localization during keratinocytes differentiation. In terms of tissue distribution, expressed in the cell nuclei of renal tubules, hepatocytes and skeletal muscles. Expressed in skin (at protein level).

Its subcellular location is the nucleus. It is found in the cytoplasm. Tumor suppressor that is a key regulator of the G1/S transition of the cell cycle. The hypophosphorylated form binds transcription regulators of the E2F family, preventing transcription of E2F-responsive genes. Both physically blocks E2Fs transactivating domain and recruits chromatin-modifying enzymes that actively repress transcription. Cyclin and CDK-dependent phosphorylation of RB1 induces its dissociation from E2Fs, thereby activating transcription of E2F responsive genes and triggering entry into S phase. RB1 also promotes the G0-G1 transition upon phosphorylation and activation by CDK3/cyclin-C. Directly involved in heterochromatin formation by maintaining overall chromatin structure and, in particular, that of constitutive heterochromatin by stabilizing histone methylation. Recruits and targets histone methyltransferases SUV39H1, KMT5B and KMT5C, leading to epigenetic transcriptional repression. Controls histone H4 'Lys-20' trimethylation. Inhibits the intrinsic kinase activity of TAF1. Mediates transcriptional repression by SMARCA4/BRG1 by recruiting a histone deacetylase (HDAC) complex to the c-FOS promoter. In resting neurons, transcription of the c-FOS promoter is inhibited by BRG1-dependent recruitment of a phospho-RB1-HDAC1 repressor complex. Upon calcium influx, RB1 is dephosphorylated by calcineurin, which leads to release of the repressor complex. The protein is Retinoblastoma-associated protein (Rb1) of Mus musculus (Mouse).